Reading from the N-terminus, the 656-residue chain is UvrABC system protein C (656 aa).

The 80-residue stretch at T16 to V95 folds into the GIY-YIG domain. Positions G208–V243 constitute a UVR domain.

It belongs to the UvrC family. Interacts with UvrB in an incision complex.

It localises to the cytoplasm. Functionally, the UvrABC repair system catalyzes the recognition and processing of DNA lesions. UvrC both incises the 5' and 3' sides of the lesion. The N-terminal half is responsible for the 3' incision and the C-terminal half is responsible for the 5' incision. The sequence is that of UvrABC system protein C from Thermobifida fusca (strain YX).